Here is a 337-residue protein sequence, read N- to C-terminus: Putative 2-aminoethylphosphonate-binding periplasmic protein (337 aa).

A signal peptide spans 1 to 21; it reads MKLSRLALLSVFALASAPSWA.

The protein belongs to the bacterial solute-binding protein 1 family.

Its subcellular location is the periplasm. Functionally, probably part of the PhnSTUV complex (TC 3.A.1.11.5) involved in 2-aminoethylphosphonate import. This is Putative 2-aminoethylphosphonate-binding periplasmic protein (phnS) from Salmonella typhimurium (strain LT2 / SGSC1412 / ATCC 700720).